A 391-amino-acid chain; its full sequence is Glycerophosphocholine acyltransferase 1 (391 aa).

At 1-66 (MSNNEDPINE…IAKQAEEHES (66 aa)) the chain is on the cytoplasmic side. The chain crosses the membrane as a helical span at residues 67 to 87 (FINKVTHLLGVLGFGGFCFLL). At 88–92 (GARPQ) the chain is on the lumenal side. Residues 93 to 113 (DIPYVYCLFFFIFVPLRWIYY) form a helical membrane-spanning segment. At 114–119 (RFKKWH) the chain is on the cytoplasmic side. The helical transmembrane segment at 120–140 (YFLLDFCYYANTIFLVDLLLY) threads the bilayer. Residues 141 to 144 (PKDE) are Lumenal-facing. A helical membrane pass occupies residues 145–165 (KLFMVCFSFAEGPLAWALIVW). Topologically, residues 166 to 172 (RCSLVFS) are cytoplasmic. A helical transmembrane segment spans residues 173-193 (SVDKIVSVLIHLLPGLVFFTI). Topologically, residues 194 to 226 (RWWNPATFEAMHPEGTSGRASWPYVEDKSFLFT) are lumenal. A helical membrane pass occupies residues 227-247 (WLFLVPLVAYFLWQLLYFLIV). The Cytoplasmic segment spans residues 248 to 294 (NVLRRQRLLRDPEVMTSYRELSKKAQKANNVWWRLSGLLGDQNRMLM). The helical transmembrane segment at 295–315 (YILLQALFTVATTALTVPIFL) threads the bilayer. Over 316 to 318 (SYE) the chain is Lumenal. The chain crosses the membrane as a helical span at residues 319-339 (LHAVFQILKVSAAVWNGGSFL). Residues 340-391 (LDVMPRQVILKEKKKSELQPAHIQQYHSEPKQDQSPNSMEIRMKTIHSAEEQ) are Cytoplasmic-facing. Residues 354-391 (KSELQPAHIQQYHSEPKQDQSPNSMEIRMKTIHSAEEQ) form a disordered region. The segment covering 380–391 (IRMKTIHSAEEQ) has biased composition (basic and acidic residues).

Belongs to the GPC1 family.

Its subcellular location is the membrane. It catalyses the reaction sn-glycerol 3-phosphocholine + an acyl-CoA = a monoacyl-sn-glycero-3-phosphocholine + CoA. The catalysed reaction is sn-glycero-3-phosphoethanolamine + an acyl-CoA = a monoacyl-sn-glycero-3-phosphoethanolamine + CoA. It carries out the reaction sn-glycerol 3-phosphocholine + hexadecanoyl-CoA = hexadecanoyl-sn-glycero-3-phosphocholine + CoA. The enzyme catalyses (9Z)-hexadecenoyl-CoA + sn-glycerol 3-phosphocholine = (9Z-hexadecenoyl)-sn-glycero-3-phosphocholine + CoA. It catalyses the reaction (9Z,12Z)-octadecadienoyl-CoA + sn-glycerol 3-phosphocholine = (9Z,12Z-octadecadienoyl)-sn-glycero-3-phosphocholine + CoA. The catalysed reaction is (12R)-hydroxy-(9Z)-octadecenoyl-CoA + sn-glycerol 3-phosphocholine = (12R-hydroxy-9Z-octadecenoyl)-sn-glycero-3-phosphocholine + CoA. It carries out the reaction (9Z,12Z,15Z)-octadecatrienoyl-CoA + sn-glycerol 3-phosphocholine = (9Z,12Z,15Z-octadecatrienoyl)-sn-glycero-3-phosphocholine + CoA. The enzyme catalyses sn-glycerol 3-phosphocholine + (9Z)-octadecenoyl-CoA = (9Z-octadecenoyl)-sn-glycero-3-phosphocholine + CoA. Its function is as follows. Glycerophosphocholine acyltransferase (GPCAT) that utilizes acyl-CoA to acylate glycero-3-phosphocholine (GPC), forming lysophosphatidylcholine (LPC). Shows broad acyl specificities with a preference for 16:0-CoA, polyunsaturated acyl-CoA, and the hydroxylated ricinoleoyl-CoA. Also catalyzes the acylation of glycero-3-phosphoethanolamine (GPE) with acyl-CoA. In addition to acyl-CoA, GPCAT efficiently utilizes LPC and lysophosphatidylethanolamine (LPE) as acyl donors in the acylation of GPC. Contributes to the maintenance of phosphatidylcholine (PC) homeostasis and might also have specific functions in acyl editing of PC, such as transferring acyl groups modified at the sn-2 position of PC to the sn-1. The chain is Glycerophosphocholine acyltransferase 1 from Ricinus communis (Castor bean).